The following is a 51-amino-acid chain: Large ribosomal subunit protein bL33 (51 aa).

Belongs to the bacterial ribosomal protein bL33 family.

The polypeptide is Large ribosomal subunit protein bL33 (Alkalilimnicola ehrlichii (strain ATCC BAA-1101 / DSM 17681 / MLHE-1)).